Reading from the N-terminus, the 282-residue chain is MLLLQIVVLALIQGITEVLPLSSTGHLALLPLLTPWPSPTTWPDQGVALDVAVHLGTLGAVALYFWRDEAAMIGGCLRLLKGKRDPGARLAFLVVLGTLPAVATVLLLAHFAGPIASPGLATIGWTTLGFGLLLGVIDRLCMTVKRVEHMGGIDCLLIGLAQCLALLPGVSRTGVAMTAARLLGYERVESARFSMLLSIPAIAGAATLVGLDLARVGQSAMAPAALIAAVTAFLAAFLAVAAMMAWLRRHGFGPFVAYRVLLGAALLALAYLGPDLAPFLVS.

Helical transmembrane passes span 1 to 21 (MLLL…VLPL), 46 to 66 (GVAL…LYFW), 91 to 111 (AFLV…LAHF), 117 to 137 (SPGL…LGVI), 150 to 170 (MGGI…LPGV), 193 to 213 (FSML…GLDL), 226 to 246 (LIAA…MMAW), and 260 to 280 (VLLG…APFL).

This sequence belongs to the UppP family.

The protein resides in the cell inner membrane. It catalyses the reaction di-trans,octa-cis-undecaprenyl diphosphate + H2O = di-trans,octa-cis-undecaprenyl phosphate + phosphate + H(+). Its function is as follows. Catalyzes the dephosphorylation of undecaprenyl diphosphate (UPP). Confers resistance to bacitracin. This Rhodospirillum rubrum (strain ATCC 11170 / ATH 1.1.1 / DSM 467 / LMG 4362 / NCIMB 8255 / S1) protein is Undecaprenyl-diphosphatase 1.